Reading from the N-terminus, the 415-residue chain is Histidine--tRNA ligase (415 aa).

The protein belongs to the class-II aminoacyl-tRNA synthetase family. As to quaternary structure, homodimer.

It is found in the cytoplasm. It carries out the reaction tRNA(His) + L-histidine + ATP = L-histidyl-tRNA(His) + AMP + diphosphate + H(+). This Clostridium botulinum (strain Loch Maree / Type A3) protein is Histidine--tRNA ligase.